Consider the following 101-residue polypeptide: Ubiquitin-related modifier 1 (101 aa).

1-thioglycine is present on Gly-101. A Glycyl lysine isopeptide (Gly-Lys) (interchain with K-? in acceptor proteins) cross-link involves residue Gly-101.

The protein belongs to the URM1 family. As to quaternary structure, component of a complex at least composed of URM1, CTU2/NCS2 and CTU1/ATPBD3. C-terminal thiocarboxylation occurs in 2 steps, it is first acyl-adenylated (-COAMP) via the hesA/moeB/thiF part of MOCS3, then thiocarboxylated (-COSH) via the rhodanese domain of MOCS3.

Its subcellular location is the cytoplasm. It participates in tRNA modification; 5-methoxycarbonylmethyl-2-thiouridine-tRNA biosynthesis. Acts as a sulfur carrier required for 2-thiolation of mcm(5)S(2)U at tRNA wobble positions of cytosolic tRNA(Lys), tRNA(Glu) and tRNA(Gln). Serves as sulfur donor in tRNA 2-thiolation reaction by being thiocarboxylated (-COSH) at its C-terminus by MOCS3. The sulfur is then transferred to tRNA to form 2-thiolation of mcm(5)S(2)U. Also acts as a ubiquitin-like protein (UBL) that is covalently conjugated via an isopeptide bond to lysine residues of target proteins such as MOCS3, ATPBD3, CTU2, USP15 and CAS. The thiocarboxylated form serves as substrate for conjugation and oxidative stress specifically induces the formation of UBL-protein conjugates. This Homo sapiens (Human) protein is Ubiquitin-related modifier 1.